Consider the following 256-residue polypeptide: 5-keto-4-deoxy-D-glucarate aldolase (256 aa).

His-50 functions as the Proton acceptor in the catalytic mechanism. Substrate is bound at residue Gln-151. Glu-153 provides a ligand contact to Mg(2+). Residues Ser-178 and Asp-179 each contribute to the substrate site. Residue Asp-179 participates in Mg(2+) binding.

This sequence belongs to the HpcH/HpaI aldolase family. KDGluc aldolase subfamily. In terms of assembly, homohexamer; trimer of dimers. Requires Mg(2+) as cofactor.

It catalyses the reaction 5-dehydro-4-deoxy-D-glucarate = 2-hydroxy-3-oxopropanoate + pyruvate. The catalysed reaction is 2-dehydro-3-deoxy-D-glucarate = 2-hydroxy-3-oxopropanoate + pyruvate. Its pathway is carbohydrate acid metabolism; galactarate degradation; D-glycerate from galactarate: step 2/3. Catalyzes the reversible retro-aldol cleavage of both 5-keto-4-deoxy-D-glucarate and 2-keto-3-deoxy-D-glucarate to pyruvate and tartronic semialdehyde. This chain is 5-keto-4-deoxy-D-glucarate aldolase, found in Escherichia coli (strain K12 / DH10B).